The primary structure comprises 324 residues: Acetyl-coenzyme A carboxylase carboxyl transferase subunit alpha (324 aa).

The 255-residue stretch at 37 to 291 folds into the CoA carboxyltransferase C-terminal domain; the sequence is KLERRLDKLK…QNFILQEWLR (255 aa).

Belongs to the AccA family. Acetyl-CoA carboxylase is a heterohexamer composed of biotin carboxyl carrier protein (AccB), biotin carboxylase (AccC) and two subunits each of ACCase subunit alpha (AccA) and ACCase subunit beta (AccD).

It localises to the cytoplasm. It carries out the reaction N(6)-carboxybiotinyl-L-lysyl-[protein] + acetyl-CoA = N(6)-biotinyl-L-lysyl-[protein] + malonyl-CoA. Its pathway is lipid metabolism; malonyl-CoA biosynthesis; malonyl-CoA from acetyl-CoA: step 1/1. In terms of biological role, component of the acetyl coenzyme A carboxylase (ACC) complex. First, biotin carboxylase catalyzes the carboxylation of biotin on its carrier protein (BCCP) and then the CO(2) group is transferred by the carboxyltransferase to acetyl-CoA to form malonyl-CoA. This Chlamydia caviae (strain ATCC VR-813 / DSM 19441 / 03DC25 / GPIC) (Chlamydophila caviae) protein is Acetyl-coenzyme A carboxylase carboxyl transferase subunit alpha.